Reading from the N-terminus, the 289-residue chain is tRNA pseudouridine synthase A (289 aa).

The active-site Nucleophile is the aspartate 67. Tyrosine 125 serves as a coordination point for substrate.

It belongs to the tRNA pseudouridine synthase TruA family. In terms of assembly, homodimer.

It carries out the reaction uridine(38/39/40) in tRNA = pseudouridine(38/39/40) in tRNA. Its function is as follows. Formation of pseudouridine at positions 38, 39 and 40 in the anticodon stem and loop of transfer RNAs. The chain is tRNA pseudouridine synthase A from Prochlorococcus marinus (strain MIT 9211).